The following is a 138-amino-acid chain: Small ribosomal subunit protein bS6 (138 aa).

Positions 100-138 are disordered; the sequence is SPLAKGREEDDSDSSARRARDDSDDDGDDDEDDRRASAD. Acidic residues predominate over residues 121-131; it reads DSDDDGDDDED.

The protein belongs to the bacterial ribosomal protein bS6 family.

Its function is as follows. Binds together with bS18 to 16S ribosomal RNA. In Thioalkalivibrio sulfidiphilus (strain HL-EbGR7), this protein is Small ribosomal subunit protein bS6.